The following is a 1902-amino-acid chain: Rho GTPase-activating protein 21-B (1902 aa).

8 disordered regions span residues 1 to 44 (MATR…EGFC), 78 to 97 (TSVKDEENGNRGVNAGRPRN), 284 to 317 (RTNRAGPLHRTGLADPSILKRTTSPSSSTPNVPM), 348 to 369 (PAAHAEESPSPTNHYASPGSHQ), 409 to 450 (NTTD…SQER), 581 to 603 (TRNFQNSSRAPHPRPALSDRSGF), 613 to 632 (IPTPYAAKPHSPSVRSDDGI), and 879 to 902 (KARENVQSSEDSESRKDSSSDVFS). The segment covering 10–22 (EQQQEPSSPASEI) has biased composition (polar residues). In terms of domain architecture, PDZ spans 77–162 (HTSVKDEENG…TLELSVMPKD (86 aa)). Residues 305–317 (TTSPSSSTPNVPM) are compositionally biased toward low complexity. Residues 409 to 424 (NTTDYNQMLPNRSSGQ) are compositionally biased toward polar residues. The PH domain maps to 903–1016 (DSNKEGFLYF…WIKAIQENGN (114 aa)). A compositionally biased stretch (polar residues) spans 1039 to 1063 (TMMSSSSNKTEPSPKAQRQTLSIRQ). The segment at 1039 to 1095 (TMMSSSSNKTEPSPKAQRQTLSIRQQFRAGKPDDDISPPKDKGSWRRIMKKPFEKKP) is disordered. The span at 1068 to 1082 (GKPDDDISPPKDKGS) shows a compositional bias: basic and acidic residues. One can recognise a Rho-GAP domain in the interval 1103 to 1295 (VRLDDCPPAH…TLIQKHDWFF (193 aa)). Disordered stretches follow at residues 1306-1357 (TVHE…GSGK), 1375-1394 (RKRKKQKDKPQPSSSEDELD), 1494-1520 (MSDSGTMLSTSSQASVQGSKPKVVSPE), 1559-1704 (VQSV…EPAW), 1729-1748 (QKANAAETRKKKNIRRRHTL), and 1803-1890 (TSTS…KLSG). Over residues 1339–1357 (SDSATSDSAKSKGSWGSGK) the composition is skewed to low complexity. Positions 1494–1511 (MSDSGTMLSTSSQASVQG) are enriched in polar residues. 2 stretches are compositionally biased toward basic and acidic residues: residues 1575-1585 (SELVSEGRPME) and 1601-1613 (FDRRHQSKAEEPS). Positions 1614–1630 (RNVQVNSEGSPSCTEGS) are enriched in polar residues. Basic and acidic residues-rich tracts occupy residues 1634-1652 (KMDRRRFSSHKLIECDTLS) and 1661-1673 (TDSDCSAESKTEE). The span at 1737 to 1748 (RKKKNIRRRHTL) shows a compositional bias: basic residues. Polar residues predominate over residues 1865 to 1878 (NGDSFQSKNKNNFS).

Its subcellular location is the golgi apparatus membrane. It localises to the cell junction. It is found in the cytoplasmic vesicle membrane. The protein resides in the cytoplasm. The protein localises to the cytoskeleton. Its function is as follows. GTPase-activating protein (GAP) for rhoa and cdc42. This Xenopus laevis (African clawed frog) protein is Rho GTPase-activating protein 21-B (arhgap21-b).